The sequence spans 233 residues: Adenosine 5'-phosphosulfate reductase (233 aa).

Residues Cys-120, Cys-121, Cys-203, and Cys-206 each coordinate [4Fe-4S] cluster. Cys-229 serves as the catalytic Nucleophile; cysteine thiosulfonate intermediate.

Belongs to the PAPS reductase family. CysH subfamily. Requires [4Fe-4S] cluster as cofactor.

The protein localises to the cytoplasm. It carries out the reaction [thioredoxin]-disulfide + sulfite + AMP + 2 H(+) = adenosine 5'-phosphosulfate + [thioredoxin]-dithiol. It participates in sulfur metabolism; hydrogen sulfide biosynthesis; sulfite from sulfate. Catalyzes the formation of sulfite from adenosine 5'-phosphosulfate (APS) using thioredoxin as an electron donor. This is Adenosine 5'-phosphosulfate reductase from Lysinibacillus sphaericus (strain C3-41).